The chain runs to 115 residues: Non-specific lipid-transfer protein 4.3 (115 aa).

The N-terminal stretch at 1 to 25 is a signal peptide; it reads MARAAATQLVLVAMVAAMLLVATDA. Disulfide bonds link cysteine 29-cysteine 77, cysteine 39-cysteine 54, cysteine 55-cysteine 97, and cysteine 75-cysteine 111.

The protein belongs to the plant LTP family.

Its function is as follows. Plant non-specific lipid-transfer proteins transfer phospholipids as well as galactolipids across membranes. May play a role in wax or cutin deposition in the cell walls of expanding epidermal cells and certain secretory tissues. This Hordeum vulgare (Barley) protein is Non-specific lipid-transfer protein 4.3 (LTP4.3).